The chain runs to 225 residues: Cytidylate kinase (225 aa).

Residue 12–20 (GPSGAGKGT) coordinates ATP.

This sequence belongs to the cytidylate kinase family. Type 1 subfamily.

It is found in the cytoplasm. It catalyses the reaction CMP + ATP = CDP + ADP. The enzyme catalyses dCMP + ATP = dCDP + ADP. This chain is Cytidylate kinase, found in Stenotrophomonas maltophilia (strain R551-3).